The chain runs to 256 residues: Hydroxyacylglutathione hydrolase (256 aa).

Positions 57, 59, 61, 62, 115, 134, and 172 each coordinate Zn(2+).

The protein belongs to the metallo-beta-lactamase superfamily. Glyoxalase II family. As to quaternary structure, monomer. Requires Zn(2+) as cofactor.

It catalyses the reaction an S-(2-hydroxyacyl)glutathione + H2O = a 2-hydroxy carboxylate + glutathione + H(+). The protein operates within secondary metabolite metabolism; methylglyoxal degradation; (R)-lactate from methylglyoxal: step 2/2. In terms of biological role, thiolesterase that catalyzes the hydrolysis of S-D-lactoyl-glutathione to form glutathione and D-lactic acid. This chain is Hydroxyacylglutathione hydrolase, found in Rhizobium meliloti (strain 1021) (Ensifer meliloti).